A 531-amino-acid chain; its full sequence is GMP synthase [glutamine-hydrolyzing] (531 aa).

The Glutamine amidotransferase type-1 domain occupies K20 to D213. The Nucleophile role is filled by C97. Active-site residues include H187 and E189. Residues W214–R406 form the GMPS ATP-PPase domain. Position 241–247 (S241–A247) interacts with ATP.

Homodimer.

It catalyses the reaction XMP + L-glutamine + ATP + H2O = GMP + L-glutamate + AMP + diphosphate + 2 H(+). It participates in purine metabolism; GMP biosynthesis; GMP from XMP (L-Gln route): step 1/1. Catalyzes the synthesis of GMP from XMP. The sequence is that of GMP synthase [glutamine-hydrolyzing] from Afipia carboxidovorans (strain ATCC 49405 / DSM 1227 / KCTC 32145 / OM5) (Oligotropha carboxidovorans).